Reading from the N-terminus, the 222-residue chain is Putative adhesin RP828 (222 aa).

An N-terminal signal peptide occupies residues 1–22 (MKKLLLIATASATILSSSVSFA).

In terms of biological role, adheres to biotinylated epithelial (Vero cell) proteins. This is Putative adhesin RP828 from Rickettsia prowazekii (strain Madrid E).